We begin with the raw amino-acid sequence, 167 residues long: Ubiquitin-fold modifier-conjugating enzyme 1 (167 aa).

The Glycyl thioester intermediate role is filled by C116. A Glycyl lysine isopeptide (Lys-Gly) (interchain with G-Cter in UFM1) cross-link involves residue K122.

The protein belongs to the ubiquitin-conjugating enzyme family. UFC1 subfamily. In terms of assembly, interacts with UBA5 (via C-terminus). Interacts with UFL1. Interacts with UFM1. Interacts with KIRREL3. Ufmylated at Lys-122. Deufmylated by UFSP1.

Functionally, E2-like enzyme which specifically catalyzes the second step in ufmylation. Accepts the ubiquitin-like modifier UFM1 from the E1 enzyme UBA5 and forms an intermediate with UFM1 via a thioester linkage. Ufmylation is involved in various processes, such as ribosome recycling, response to DNA damage, interferon response or reticulophagy (also called ER-phagy). The polypeptide is Ubiquitin-fold modifier-conjugating enzyme 1 (Homo sapiens (Human)).